Consider the following 402-residue polypeptide: MKAVTLLGSTGSIGTQTLDILEQYPDRFRLVGLAAGRNVALLSEQIRRHRPEIVAIQDAAQLSELQAAIADLDNPPLILTGEAGVTEVARYGDAEIVVTGIVGCAGLLPTIAAIEAGKDIALANKETLIAAGPVVLPLLQKHGVTITPADSEHSAIFQCIQGLSTHADFRPAQVVAGLRRILLTASGGAFRDWPVERLSQVTVADALKHPNWSMGRKITVDSATLMNKGLEVIEAHYLFGLDYDYIDIVIHPQSIIHSLIELEDTSVLAQLGWPDMRLPLLYALSWPDRLSTQWSALDLVKAGSLEFREPDHAKYPCMDLAYAAGRKGGTMPAVLNAANEQAVALFLEEQIHFSDIPRLIERACDRHQTEWQQQPSLDDILAYDAWARQFVQASYQSLESVV.

NADPH contacts are provided by Thr-10, Gly-11, Ser-12, Ile-13, Gly-36, Arg-37, Asn-38, and Asn-124. Residue Lys-125 participates in 1-deoxy-D-xylulose 5-phosphate binding. NADPH is bound at residue Glu-126. Residue Asp-150 participates in Mn(2+) binding. 1-deoxy-D-xylulose 5-phosphate contacts are provided by Ser-151, Glu-152, Ser-186, and His-209. A Mn(2+)-binding site is contributed by Glu-152. Gly-215 is a binding site for NADPH. Positions 222, 227, 228, and 231 each coordinate 1-deoxy-D-xylulose 5-phosphate. Glu-231 serves as a coordination point for Mn(2+).

The protein belongs to the DXR family. Mg(2+) serves as cofactor. Mn(2+) is required as a cofactor.

It catalyses the reaction 2-C-methyl-D-erythritol 4-phosphate + NADP(+) = 1-deoxy-D-xylulose 5-phosphate + NADPH + H(+). It participates in isoprenoid biosynthesis; isopentenyl diphosphate biosynthesis via DXP pathway; isopentenyl diphosphate from 1-deoxy-D-xylulose 5-phosphate: step 1/6. With respect to regulation, inhibited by fosmidomycin. Its function is as follows. Catalyzes the NADPH-dependent rearrangement and reduction of 1-deoxy-D-xylulose-5-phosphate (DXP) to 2-C-methyl-D-erythritol 4-phosphate (MEP). The chain is 1-deoxy-D-xylulose 5-phosphate reductoisomerase from Synechococcus sp. (strain ATCC 27144 / PCC 6301 / SAUG 1402/1) (Anacystis nidulans).